Reading from the N-terminus, the 112-residue chain is Nitrogen regulatory protein P-II (112 aa).

Phosphoserine is present on Ser49. Tyr51 is subject to O-UMP-tyrosine.

This sequence belongs to the P(II) protein family. Homotrimer. In terms of processing, phosphorylation dependent on the nitrogen source and spectral light quality.

Its function is as follows. P-II indirectly controls the transcription of the GS gene (glnA). P-II prevents NR-II-catalyzed conversion of NR-I to NR-I-phosphate, the transcriptional activator of glnA. When P-II is phosphorylated, these events are reversed. In nitrogen-limiting conditions, when the ratio of Gln to 2-ketoglutarate decreases, P-II is phosphorylated which allows the deadenylation of glutamine synthetase (GS), thus activating the enzyme. This is Nitrogen regulatory protein P-II (glnB) from Microchaete diplosiphon (Fremyella diplosiphon).